A 572-amino-acid polypeptide reads, in one-letter code: Golgi apyrase (572 aa).

Residues Met1–Lys470 lie on the Lumenal side of the membrane. The active-site Proton acceptor is Glu145. The chain crosses the membrane as a helical span at residues Leu471–Gly491. Residues Tyr492–Pro572 are Cytoplasmic-facing.

This sequence belongs to the GDA1/CD39 NTPase family. Requires Ca(2+) as cofactor. Mg(2+) serves as cofactor. It depends on Mn(2+) as a cofactor.

The protein localises to the golgi apparatus. It localises to the membrane. It catalyses the reaction a ribonucleoside 5'-triphosphate + 2 H2O = a ribonucleoside 5'-phosphate + 2 phosphate + 2 H(+). It participates in protein modification; protein glycosylation. In terms of biological role, catalyzes the hydrolysis of phosphoanhydride bonds of nucleoside tri- and di-phosphates. Required for Golgi glycosylation and cell wall integrity. Involved in N-mannosylation of proteins in Golgi. This Schizosaccharomyces pombe (strain 972 / ATCC 24843) (Fission yeast) protein is Golgi apyrase.